The sequence spans 79 residues: Serine protease inhibitor Kazal-type 1 (79 aa).

An N-terminal signal peptide occupies residues 1–18 (MKVAIIFLLSALALLSLA). One can recognise a Kazal-like domain in the interval 26 to 79 (NGKTPNCPKQIMGCPRIYDPVCGTNGITYPSECSLCFENRKFGTSIHIQRRGTC). Cystine bridges form between C32-C61, C39-C58, and C47-C79.

It is found in the secreted. In terms of biological role, serine protease inhibitor which exhibits anti-trypsin activity. In the pancreas, protects against trypsin-catalyzed premature activation of zymogens. Its function is as follows. In the male reproductive tract, binds to sperm heads where it modulates sperm capacitance by inhibiting calcium uptake and nitrogen oxide (NO) production. The polypeptide is Serine protease inhibitor Kazal-type 1 (Rattus norvegicus (Rat)).